A 547-amino-acid chain; its full sequence is MALPVQAAPQRAQVRRTAQFHPSVWGDYFIKNAPDNKMVSIWKEQAKVLEEEVRRMIISETQKPSGKLKLIDVIQRLGIAYHFEEEIGEVIEQVYSNYDDDEDLYDIALRFRLLRQQGYNVSSDVFDKFKDCKGDFKKHLVNDVQGLLSLHEASYMSVQGEKILDEALEFTKTHLMATQLSSPLPDQVSHALRWPVRRGLPRKEAWQYFSIYQQDREHIEPLLKLAKLDFNIVQKLHHKDMSIITRWWIDLDFTTKLSFARDRVIECSFWALGVFYEPQFVFARQVLSKAVAILSVMDDIYDVHGTIEELELFTEVVERWDISMKDQLPDYMKWYFEALIDFYAEIEAETTKGGRSFCIHYAKEAVKKQVRAYITEARWFNNDYVPTLEEYISNAVISSTYPILITLSFCGMGKFASKDVFDWLFTEPNKLLYTASGLARLIDDIRSHEFEQERGHVASAVECYMKQHSVSKQEAYNELNSIVVNMWKDLNEELLKETGVLPKPILACILNIVRVMDVVYKDEDSYTNSRNSLKDILATFLVNPVPV.

Mg(2+) is bound by residues D298, D302, and E451. A DDXXD motif motif is present at residues 298-302 (DDIYD).

It belongs to the terpene synthase family. The cofactor is Mg(2+).

Its function is as follows. Probable sesquiterpene synthase. This chain is Probable terpene synthase 3 (TPS3), found in Ricinus communis (Castor bean).